The chain runs to 370 residues: Cobalt-precorrin-5B C(1)-methyltransferase (370 aa).

Belongs to the CbiD family.

The enzyme catalyses Co-precorrin-5B + S-adenosyl-L-methionine = Co-precorrin-6A + S-adenosyl-L-homocysteine. The protein operates within cofactor biosynthesis; adenosylcobalamin biosynthesis; cob(II)yrinate a,c-diamide from sirohydrochlorin (anaerobic route): step 6/10. In terms of biological role, catalyzes the methylation of C-1 in cobalt-precorrin-5B to form cobalt-precorrin-6A. The sequence is that of Cobalt-precorrin-5B C(1)-methyltransferase from Prochlorococcus marinus (strain MIT 9312).